The chain runs to 297 residues: Large ribosomal subunit protein uL18 (297 aa).

G2 carries the post-translational modification N-acetylglycine. 2 positions are modified to N6-acetyllysine: K5 and K48. A Phosphoserine modification is found at S185. Position 220 is an N6-acetyllysine; alternate (K220). K220 is covalently cross-linked (Glycyl lysine isopeptide (Lys-Gly) (interchain with G-Cter in SUMO1); alternate). K220 participates in a covalent cross-link: Glycyl lysine isopeptide (Lys-Gly) (interchain with G-Cter in SUMO2); alternate. T232 carries the post-translational modification Phosphothreonine. The tract at residues 253 to 297 is disordered; the sequence is YEKKPKREVKKKRWNRPKMSLAQKKDRVAQKKASFLRAQERAAES. Basic residues predominate over residues 258 to 268; the sequence is KREVKKKRWNR. A Phosphoserine modification is found at S272.

Belongs to the universal ribosomal protein uL18 family. Component of the large ribosomal subunit (LSU). Part of the 5S RNP complex, which is a LSU subcomplex composed of the 5S RNA, RPL5 and RPL11. Component of a hexameric 5S RNP precursor complex, composed of 5S RNA, RRS1, RPF2/BXDC1, RPL5, RPL11 and HEATR3; this complex acts as a precursor for ribosome assembly. Interacts with NVL in an ATP-dependent manner. Interacts with RRP1B. Interacts with IPO5, IPO7 and KPNB1; these interactions may be involved in RPL5 nuclear import for the assembly of ribosomal subunits.

It localises to the cytoplasm. The protein localises to the nucleus. Its subcellular location is the nucleolus. Functionally, component of the ribosome, a large ribonucleoprotein complex responsible for the synthesis of proteins in the cell. The small ribosomal subunit (SSU) binds messenger RNAs (mRNAs) and translates the encoded message by selecting cognate aminoacyl-transfer RNA (tRNA) molecules. The large subunit (LSU) contains the ribosomal catalytic site termed the peptidyl transferase center (PTC), which catalyzes the formation of peptide bonds, thereby polymerizing the amino acids delivered by tRNAs into a polypeptide chain. The nascent polypeptides leave the ribosome through a tunnel in the LSU and interact with protein factors that function in enzymatic processing, targeting, and the membrane insertion of nascent chains at the exit of the ribosomal tunnel. As part of the 5S RNP/5S ribonucleoprotein particle it is an essential component of the LSU, required for its formation and the maturation of rRNAs. It also couples ribosome biogenesis to p53/TP53 activation. As part of the 5S RNP it accumulates in the nucleoplasm and inhibits MDM2, when ribosome biogenesis is perturbed, mediating the stabilization and the activation of TP53. This chain is Large ribosomal subunit protein uL18 (Rpl5), found in Mus musculus (Mouse).